Here is a 210-residue protein sequence, read N- to C-terminus: Probable GTP-binding protein EngB (210 aa).

One can recognise an EngB-type G domain in the interval 25–199 (TGIEVAFAGR…RQKLDSWFNE (175 aa)). GTP contacts are provided by residues 33–40 (GRSNAGKS), 60–64 (GRTQL), 78–81 (DLPG), 145–148 (TKAD), and 178–180 (FSS). Positions 40 and 62 each coordinate Mg(2+).

The protein belongs to the TRAFAC class TrmE-Era-EngA-EngB-Septin-like GTPase superfamily. EngB GTPase family. The cofactor is Mg(2+).

In terms of biological role, necessary for normal cell division and for the maintenance of normal septation. The sequence is that of Probable GTP-binding protein EngB from Klebsiella pneumoniae (strain 342).